A 248-amino-acid polypeptide reads, in one-letter code: Cobalt-precorrin-6A reductase (248 aa).

Belongs to the precorrin-6x reductase family.

It carries out the reaction Co-precorrin-6B + NAD(+) = Co-precorrin-6A + NADH + H(+). Its pathway is cofactor biosynthesis; adenosylcobalamin biosynthesis; cob(II)yrinate a,c-diamide from sirohydrochlorin (anaerobic route): step 7/10. Catalyzes the reduction of the macrocycle of cobalt-precorrin-6A to cobalt-precorrin-6B. This chain is Cobalt-precorrin-6A reductase (cbiJ), found in Methanococcus maripaludis (Methanococcus deltae).